Consider the following 1567-residue polypeptide: ABC multidrug transporter MDR1 (1567 aa).

Positions 1–11 (MASQPPQPPSG) are enriched in pro residues. A disordered region spans residues 1–37 (MASQPPQPPSGQPDTQYEEYQSEVITETTNRPTPAAD). Positions 22–32 (SEVITETTNRP) are enriched in polar residues. N-linked (GlcNAc...) asparagine glycosylation is found at Asn149, Asn157, and Asn356. In terms of domain architecture, ABC transporter 1 spans 167–432 (VQYQDTFLSP…FEEMGWYCPP (266 aa)). The next 6 helical transmembrane spans lie at 543-563 (STIA…SLFF), 571-591 (GFFA…LMSI), 636-656 (IPIK…LGGL), 661-681 (AKFF…SAIF), 691-711 (IPQA…YTGF), and 798-818 (LGIL…VSEL). 3 N-linked (GlcNAc...) asparagine glycosylation sites follow: Asn819, Asn895, and Asn912. Residues 891–1134 (FTWRNVTYDI…LLNYFETHGA (244 aa)) enclose the ABC transporter 2 domain. 927 to 934 (GVSGAGKT) provides a ligand contact to ATP. Residues 1172 to 1202 (ESRHVQQELDRIQSETSKRNEGHGQSAEKEP) form a disordered region. A helical transmembrane segment spans residues 1231–1251 (IWGKLLLGLASALFIGFSFFL). N-linked (GlcNAc...) asparagine glycosylation occurs at Asn1253. The next 5 helical transmembrane spans lie at 1257 to 1277 (AGLQ…SSLV), 1305 to 1325 (VFLL…GIIA), 1345 to 1365 (ILLL…QMII), 1372 to 1392 (ETAG…NGVL), and 1498 to 1518 (GIGW…YYLI).

Belongs to the ABC transporter superfamily. ABCG family. PDR (TC 3.A.1.205) subfamily.

The protein localises to the cell membrane. The enzyme catalyses voriconazole(in) + ATP + H2O = voriconazole(out) + ADP + phosphate + H(+). It catalyses the reaction fluconazole(in) + ATP + H2O = fluconazole(out) + ADP + phosphate + H(+). The catalysed reaction is (R)-miconazole(in) + ATP + H2O = (R)-miconazole(out) + ADP + phosphate + H(+). It carries out the reaction (S)-miconazole(in) + ATP + H2O = (S)-miconazole(out) + ADP + phosphate + H(+). Its function is as follows. Pleiotropic ABC efflux transporter that may be involved in the modulation susceptibility to a wide range of unrelated cytotoxic compounds, including ethidium bromide, ketoconazole, cycloheximide, fluconazole, griseofulvin, imazalil and itraconazole. The chain is ABC multidrug transporter MDR1 from Trichophyton interdigitale (strain MR816).